A 355-amino-acid polypeptide reads, in one-letter code: Galectin-9 (355 aa).

Galectin domains lie at 17-148 (FSGT…ISFQ) and 227-355 (FITT…HVQT). A beta-D-galactoside is bound by residues Asn48, His61, Arg65, Asn75, 82-88 (WGPEERK), His267, Arg271, Thr281, and 287-293 (WGSEERS).

In terms of assembly, monomer. Peripheral blood leukocytes and lymphatic tissues. Expressed in lung, liver, breast and kidney with higher levels in tumor endothelial cells than normal endothelium (at protein level). Expressed in trophoblast cells in decidua and placenta in pregnancy (at protein level). Isoform 2 is the most abundant isoform expressed in endothelial cells. Upon endothelial cell activation isoform 2 expression decreases while expression of isoform 3 and isoform 5 increases. Isoform 4 decreases in pathological pregnancy.

It is found in the cytoplasm. Its subcellular location is the nucleus. The protein localises to the secreted. In terms of biological role, binds galactosides. Has high affinity for the Forssman pentasaccharide. Ligand for HAVCR2/TIM3. Binding to HAVCR2 induces T-helper type 1 lymphocyte (Th1) death. Also stimulates bactericidal activity in infected macrophages by causing macrophage activation and IL1B secretion which restricts intracellular bacterial growth. Ligand for P4HB; the interaction retains P4HB at the cell surface of Th2 T-helper cells, increasing disulfide reductase activity at the plasma membrane, altering the plasma membrane redox state and enhancing cell migration. Ligand for CD44; the interaction enhances binding of SMAD3 to the FOXP3 promoter, leading to up-regulation of FOXP3 expression and increased induced regulatory T (iTreg) cell stability and suppressive function. Promotes ability of mesenchymal stromal cells to suppress T-cell proliferation. Expands regulatory T-cells and induces cytotoxic T-cell apoptosis following virus infection. Activates ERK1/2 phosphorylation inducing cytokine (IL-6, IL-8, IL-12) and chemokine (CCL2) production in mast and dendritic cells. Inhibits degranulation and induces apoptosis of mast cells. Induces maturation and migration of dendritic cells. Inhibits natural killer (NK) cell function. Can transform NK cell phenotype from peripheral to decidual during pregnancy. Astrocyte derived galectin-9 enhances microglial TNF production. May play a role in thymocyte-epithelial interactions relevant to the biology of the thymus. May provide the molecular basis for urate flux across cell membranes, allowing urate that is formed during purine metabolism to efflux from cells and serving as an electrogenic transporter that plays an important role in renal and gastrointestinal urate excretion. Highly selective to the anion urate. Acts as an eosinophil chemoattractant. It also inhibits angiogenesis. Suppresses IFNG production by natural killer cells. This is Galectin-9 (LGALS9) from Homo sapiens (Human).